The primary structure comprises 1174 residues: Ribonucleoside-diphosphate reductase large subunit-like protein (1174 aa).

Residues 50-72 (PYVRIMNGVSGIQIGNHNAMSIA) carry the RIP homotypic interaction motif (RHIM) motif. Disordered regions lie at residues 170–269 (ASNA…KLKP) and 291–325 (AAAA…DQSS). 3 stretches are compositionally biased toward low complexity: residues 182–202 (ATSG…AATA), 233–243 (HVSVGTQATPS), and 291–316 (AAAA…AMAT).

It belongs to the ribonucleoside diphosphate reductase large chain family. Self-assembles into homo-oligomeric amyloid fibrils. Interacts with host RIPK1 (via RIP homotypic interaction motif); this interaction inhibits RIPK1 ubiquitination thereby preventing effective activation of host NF-kappa-B. Interacts with host RIPK3 (via RIP homotypic interaction motif); this interaction disrupts RIPK3-RIPK1 interactions characteristic of TNF-alpha induced necroptosis, thereby suppressing this death pathway. Interacts (via RIP homotypic interaction motif) with host ZBP1 (via RIP homotypic interaction motif); this interaction inhibits recruitment of RIPK1 and RIPK3 to ZBP1 and prevents ZBP1-induced NF-kappa-B activation. In terms of processing, undergoes proteolytic cleavage, generating two peptides, a N-terminal and a 116 kDa. The N-terminal peptide retains RIPK1- and RIPK3-binding activity as well as cell death suppression activity.

Its subcellular location is the virion. It localises to the host cytoplasm. Functionally, provides optimal viral replication conditions by promoting host cell survival and avoiding the host inflammatory response linked to NF-kappa-B activation. Blocks RIPK1 ubiquitination, thereby preventing NF-kappa-B activation and virally induced inflammatory response. Prevents host necroptosis by targeting RIPK3 thereby preventing the formation of necroptotic RIPK1-RIPK3 complexes. Also inhibits ZBP1-induced necroptosis. Does not have ribonucleotide reductase activity. Betaherpesviruses probably use another strategy to expand the dNTP pool in a quiescent host cell. In Murid herpesvirus 1 (strain Smith) (MuHV-1), this protein is Ribonucleoside-diphosphate reductase large subunit-like protein.